A 431-amino-acid chain; its full sequence is Adenylosuccinate synthetase 2 (431 aa).

GTP-binding positions include 13–19 and 41–43; these read GDEGKGK and GHT. Catalysis depends on aspartate 14, which acts as the Proton acceptor. Mg(2+)-binding residues include aspartate 14 and glycine 41. IMP contacts are provided by residues 14 to 17, 39 to 42, threonine 130, arginine 144, glutamine 225, threonine 240, and arginine 304; these read DEGK and NAGH. The active-site Proton donor is histidine 42. Position 300–306 (300–306) interacts with substrate; the sequence is SVTGRPR. Residues arginine 306, 332 to 334, and 414 to 416 each bind GTP; these read KLD and STG.

This sequence belongs to the adenylosuccinate synthetase family. Homodimer. Requires Mg(2+) as cofactor.

It localises to the cytoplasm. The catalysed reaction is IMP + L-aspartate + GTP = N(6)-(1,2-dicarboxyethyl)-AMP + GDP + phosphate + 2 H(+). It functions in the pathway purine metabolism; AMP biosynthesis via de novo pathway; AMP from IMP: step 1/2. Plays an important role in the de novo pathway of purine nucleotide biosynthesis. Catalyzes the first committed step in the biosynthesis of AMP from IMP. This is Adenylosuccinate synthetase 2 from Chromobacterium violaceum (strain ATCC 12472 / DSM 30191 / JCM 1249 / CCUG 213 / NBRC 12614 / NCIMB 9131 / NCTC 9757 / MK).